We begin with the raw amino-acid sequence, 917 residues long: Dolichyl-phosphooligosaccharide-protein glycotransferase (917 aa).

Positions 1–10 (MTENNEKVKN) are enriched in basic and acidic residues. A disordered region spans residues 1–20 (MTENNEKVKNSDSANNQSSK). Topologically, residues 1-38 (MTENNEKVKNSDSANNQSSKNSKFNFNFEDKKVKCAKT) are cytoplasmic. The span at 11–20 (SDSANNQSSK) shows a compositional bias: low complexity. The helical transmembrane segment at 39-59 (ILIIIFLAFLSFQMRAQTADM) threads the bilayer. Residues 60–154 (GFTTNEQYLD…AMDSTVTLMN (95 aa)) are Extracellular-facing. A DXD motif 1 motif is present at residues 82-84 (ALD). Asp-84 is a binding site for Mn(2+). Residues 155 to 175 (AAFWVPAILSMFLITPIFFTV) form a helical membrane-spanning segment. The Cytoplasmic segment spans residues 176 to 182 (RRITSSD). Residues 183–203 (IGGAVAAILASLSPSIFVKTV) form a helical membrane-spanning segment. The Extracellular segment spans residues 204–209 (AGFSDT). Asp-208 is a binding site for Mn(2+). The short motif at 208-210 (DTP) is the DXD motif 2 element. A helical transmembrane segment spans residues 210-230 (PILEILPLLFIVWFIIEAIHY). Residues 231–237 (SKEKNYK) are Cytoplasmic-facing. A helical transmembrane segment spans residues 238-260 (SLIYGLLATLMLALYPFMWSAWW). The Extracellular portion of the chain corresponds to 261–263 (YGY). The chain crosses the membrane as a helical span at residues 264–286 (YIVIAFLVIYAIYKGISYNSIAK). Topologically, residues 287 to 308 (YTKSKNNNHKDKIESEKLEMLN) are cytoplasmic. The chain crosses the membrane as a helical span at residues 309–329 (ILKISGLFIIGGAVLITALYG). At 330–372 (VSTTMNALQAPLNYLGLDEVSSQTGWPNVLTTVSELDTASLDE) the chain is on the extracellular side. The short motif at 361-364 (TVSE) is the TIXE motif element. A Mn(2+)-binding site is contributed by Glu-364. Residues 373-393 (IISSSLGSIHLFAIGLIGIFL) form a helical membrane-spanning segment. The Cytoplasmic segment spans residues 394–413 (SLFRKVLTPVKQISNGLAEK). The helical transmembrane segment at 414–434 (LDIKYALLLIIWFAVTFLAAS) threads the bilayer. At 435–438 (KGVR) the chain is on the extracellular side. Residue Arg-438 participates in a glycophospholipid binding. The helical transmembrane segment at 439–459 (FVALMVPPLSIGVGIFVGFIE) threads the bilayer. Topologically, residues 460–469 (QFIKNNLDKK) are cytoplasmic. Residues 470–490 (YEYVAYPTIAIIVLYALFTIY) form a helical membrane-spanning segment. Over 491–506 (RADSADLVRMLLPSNY) the chain is Extracellular. Residues 507–527 (VPIAEGIMLASLAVLIIYKVA) form a helical membrane-spanning segment. Residues 528-541 (ELIAESNKKLVMNK) are Cytoplasmic-facing. A helical transmembrane segment spans residues 542–562 (IFMILLAIGLITPTIATIVPF). Over 563 to 917 (YSVPTYNDGW…FSVDYGNYSK (355 aa)) the chain is Extracellular. Residues 592 to 594 (WWD) form an interacts with target acceptor peptide in protein substrate region. Positions 592–596 (WWDNG) match the WWDYG motif motif. Positions 719-726 (MTSIASVW) match the MI motif motif.

The protein belongs to the STT3 family. Requires Mn(2+) as cofactor. Mg(2+) is required as a cofactor.

It is found in the cell membrane. The catalysed reaction is an archaeal dolichyl phosphooligosaccharide + [protein]-L-asparagine = an archaeal dolichyl phosphate + a glycoprotein with the oligosaccharide chain attached by N-beta-D-glycosyl linkage to a protein L-asparagine.. It functions in the pathway cell surface structure biogenesis; S-layer biogenesis. It participates in protein modification; protein glycosylation. Functionally, oligosaccharyl transferase (OST) that catalyzes the initial transfer of a defined glycan (ManNAcGlc-2,3-diNAcAGlcNAc in M.voltae) from the lipid carrier dolichol-monophosphate to an asparagine residue within an Asn-X-Ser/Thr consensus motif in nascent polypeptide chains, the first step in protein N-glycosylation. Involved in the assembly of an N-linked disaccharide that decorates the S-layer glycoprotein and flagellins. This chain is Dolichyl-phosphooligosaccharide-protein glycotransferase, found in Methanococcus voltae.